A 393-amino-acid chain; its full sequence is Seven-bladed beta-propeller protein Rv1057 (393 aa).

The tract at residues 208–230 is disordered; it reads DGGRIGSRSRSRQKSSKPRGNQA. The segment covering 214-224 has biased composition (basic residues); that stretch reads SRSRSRQKSSK.

In terms of biological role, may play an important role in host-pathogen interactions and in ESAT-6 secretion. In Mycobacterium tuberculosis (strain ATCC 25618 / H37Rv), this protein is Seven-bladed beta-propeller protein Rv1057.